A 490-amino-acid chain; its full sequence is Protein nucleotidyltransferase YdiU (490 aa).

Glycine 94, glycine 96, arginine 97, lysine 117, aspartate 129, glycine 130, arginine 180, and arginine 187 together coordinate ATP. Aspartate 256 (proton acceptor) is an active-site residue. Residues asparagine 257 and aspartate 266 each coordinate Mg(2+). Aspartate 266 provides a ligand contact to ATP.

It belongs to the SELO family. It depends on Mg(2+) as a cofactor. The cofactor is Mn(2+).

The enzyme catalyses L-seryl-[protein] + ATP = 3-O-(5'-adenylyl)-L-seryl-[protein] + diphosphate. It catalyses the reaction L-threonyl-[protein] + ATP = 3-O-(5'-adenylyl)-L-threonyl-[protein] + diphosphate. It carries out the reaction L-tyrosyl-[protein] + ATP = O-(5'-adenylyl)-L-tyrosyl-[protein] + diphosphate. The catalysed reaction is L-histidyl-[protein] + UTP = N(tele)-(5'-uridylyl)-L-histidyl-[protein] + diphosphate. The enzyme catalyses L-seryl-[protein] + UTP = O-(5'-uridylyl)-L-seryl-[protein] + diphosphate. It catalyses the reaction L-tyrosyl-[protein] + UTP = O-(5'-uridylyl)-L-tyrosyl-[protein] + diphosphate. Its function is as follows. Nucleotidyltransferase involved in the post-translational modification of proteins. It can catalyze the addition of adenosine monophosphate (AMP) or uridine monophosphate (UMP) to a protein, resulting in modifications known as AMPylation and UMPylation. The protein is Protein nucleotidyltransferase YdiU of Clostridium perfringens (strain ATCC 13124 / DSM 756 / JCM 1290 / NCIMB 6125 / NCTC 8237 / Type A).